The chain runs to 61 residues: Small ribosomal subunit protein uS14B (61 aa).

C24, C27, C40, and C43 together coordinate Zn(2+).

This sequence belongs to the universal ribosomal protein uS14 family. Zinc-binding uS14 subfamily. Part of the 30S ribosomal subunit. Contacts proteins S3 and S10. Zn(2+) serves as cofactor.

Its function is as follows. Binds 16S rRNA, required for the assembly of 30S particles and may also be responsible for determining the conformation of the 16S rRNA at the A site. The polypeptide is Small ribosomal subunit protein uS14B (Kineococcus radiotolerans (strain ATCC BAA-149 / DSM 14245 / SRS30216)).